The sequence spans 231 residues: NADH-ubiquinone oxidoreductase chain 4 (231 aa).

7 helical membrane-spanning segments follow: residues 1-21, 34-54, 61-80, 84-106, 118-138, 156-176, and 211-231; these read PIAG…YGII, LFIP…LTCL, SLIA…AVII, WGLS…LFCL, ILIL…WWLL, LLIV…LGLS, and LLMI…ELVI.

This sequence belongs to the complex I subunit 4 family.

It is found in the mitochondrion membrane. It catalyses the reaction a ubiquinone + NADH + 5 H(+)(in) = a ubiquinol + NAD(+) + 4 H(+)(out). In terms of biological role, core subunit of the mitochondrial membrane respiratory chain NADH dehydrogenase (Complex I) that is believed to belong to the minimal assembly required for catalysis. Complex I functions in the transfer of electrons from NADH to the respiratory chain. The immediate electron acceptor for the enzyme is believed to be ubiquinone. The polypeptide is NADH-ubiquinone oxidoreductase chain 4 (MT-ND4) (Hypnale hypnale (Merrem's hump-nosed viper)).